A 351-amino-acid polypeptide reads, in one-letter code: DNA polymerase IV (351 aa).

The region spanning 4–184 is the UmuC domain; the sequence is FIHIDMDCFY…LPLGKIPGVG (181 aa). Positions 8 and 102 each coordinate Mg(2+). Glu103 is a catalytic residue.

This sequence belongs to the DNA polymerase type-Y family. Monomer. Mg(2+) is required as a cofactor.

Its subcellular location is the cytoplasm. It catalyses the reaction DNA(n) + a 2'-deoxyribonucleoside 5'-triphosphate = DNA(n+1) + diphosphate. Functionally, poorly processive, error-prone DNA polymerase involved in untargeted mutagenesis. Copies undamaged DNA at stalled replication forks, which arise in vivo from mismatched or misaligned primer ends. These misaligned primers can be extended by PolIV. Exhibits no 3'-5' exonuclease (proofreading) activity. May be involved in translesional synthesis, in conjunction with the beta clamp from PolIII. The polypeptide is DNA polymerase IV (Pseudoalteromonas translucida (strain TAC 125)).